We begin with the raw amino-acid sequence, 218 residues long: uncharacterized protein (218 aa).

Transmembrane regions (helical) follow at residues 28–48 (ILLF…LSGL), 66–86 (FDIG…WKPL), 92–112 (LGTL…TKIL), 122–142 (MIFC…YLTC), and 173–193 (ISVC…TVLF).

Its subcellular location is the cell membrane. This is an uncharacterized protein from Haemophilus influenzae (strain ATCC 51907 / DSM 11121 / KW20 / Rd).